Here is a 159-residue protein sequence, read N- to C-terminus: Ribosomal RNA large subunit methyltransferase H (159 aa).

Residues Leu76, Gly108, and 127–132 contribute to the S-adenosyl-L-methionine site; that span reads FGLLTL.

Belongs to the RNA methyltransferase RlmH family. In terms of assembly, homodimer.

The protein resides in the cytoplasm. The enzyme catalyses pseudouridine(1915) in 23S rRNA + S-adenosyl-L-methionine = N(3)-methylpseudouridine(1915) in 23S rRNA + S-adenosyl-L-homocysteine + H(+). Functionally, specifically methylates the pseudouridine at position 1915 (m3Psi1915) in 23S rRNA. In Streptococcus pyogenes serotype M5 (strain Manfredo), this protein is Ribosomal RNA large subunit methyltransferase H.